The following is a 187-amino-acid chain: UPF0340 protein SPJ_0612 (187 aa).

It belongs to the UPF0340 family.

The sequence is that of UPF0340 protein SPJ_0612 from Streptococcus pneumoniae (strain JJA).